The primary structure comprises 239 residues: Norbelladine 4'-O-methyltransferase 5 (239 aa).

Residues Val-55, Glu-77, 79 to 80 (GV), Ser-85, Asp-103, and Ala-132 contribute to the S-adenosyl-L-methionine site. Asp-155 contacts a divalent metal cation. S-adenosyl-L-methionine is bound at residue Asp-157. A divalent metal cation is bound by residues Asp-181 and Asn-182.

This sequence belongs to the class I-like SAM-binding methyltransferase superfamily. Cation-dependent O-methyltransferase family. Mg(2+) is required as a cofactor.

The enzyme catalyses norbelladine + S-adenosyl-L-methionine = 4'-O-methylnorbelladine + S-adenosyl-L-homocysteine + H(+). It participates in alkaloid biosynthesis. Functionally, 4'-O-methyltransferase converting norbelladine to 4'-O-methylnorbelladine. 4'-O-methylnorbelladine is a precursor to all Amaryllidaceae alkaloids such as galanthamine, lycorine and haemanthamine, and including haemanthamine- and crinamine-type alkaloids, promising anticancer agents. The chain is Norbelladine 4'-O-methyltransferase 5 from Narcissus aff. pseudonarcissus MK-2014 (Daffodil).